A 328-amino-acid polypeptide reads, in one-letter code: Lytic polysaccharide monooxygenase aasB (328 aa).

An N-terminal signal peptide occupies residues 1–18; it reads MKAFFAISASTLLATVHG. His-19 contacts Cu(2+). Cysteines 40 and 43 form a disulfide. Asn-54 is a glycosylation site (N-linked (GlcNAc...) asparagine). Disulfide bonds link Cys-66-Cys-245, Cys-102-Cys-203, Cys-118-Cys-145, Cys-153-Cys-161, Cys-167-Cys-173, and Cys-181-Cys-192. His-109 is a binding site for Cu(2+). Tyr-242 serves as a coordination point for Cu(2+). N-linked (GlcNAc...) asparagine glycosylation occurs at Asn-306.

This sequence belongs to the polysaccharide monooxygenase AA13 family. Cu(2+) is required as a cofactor.

Its subcellular location is the secreted. The enzyme catalyses starch + reduced acceptor + O2 = D-glucono-1,5-lactone-terminated malto-oligosaccharides + short-chain malto-oligosaccharides + acceptor + H2O.. Functionally, lytic polysaccharide monooxygenase involved in breakdown of granular resistant starch. The polypeptide is Lytic polysaccharide monooxygenase aasB (Emericella nidulans (strain FGSC A4 / ATCC 38163 / CBS 112.46 / NRRL 194 / M139) (Aspergillus nidulans)).